Here is a 421-residue protein sequence, read N- to C-terminus: Imidazolonepropionase (421 aa).

2 residues coordinate Fe(3+): His81 and His83. Zn(2+)-binding residues include His81 and His83. Positions 90, 153, and 186 each coordinate 4-imidazolone-5-propanoate. Tyr153 contacts N-formimidoyl-L-glutamate. Residue His251 coordinates Fe(3+). His251 serves as a coordination point for Zn(2+). Glu254 contributes to the 4-imidazolone-5-propanoate binding site. Fe(3+) is bound at residue Asp326. Asp326 is a binding site for Zn(2+). N-formimidoyl-L-glutamate is bound by residues Asn328 and Gly330. Ser331 provides a ligand contact to 4-imidazolone-5-propanoate.

It belongs to the metallo-dependent hydrolases superfamily. HutI family. Zn(2+) is required as a cofactor. The cofactor is Fe(3+).

It is found in the cytoplasm. The enzyme catalyses 4-imidazolone-5-propanoate + H2O = N-formimidoyl-L-glutamate. The protein operates within amino-acid degradation; L-histidine degradation into L-glutamate; N-formimidoyl-L-glutamate from L-histidine: step 3/3. Catalyzes the hydrolytic cleavage of the carbon-nitrogen bond in imidazolone-5-propanoate to yield N-formimidoyl-L-glutamate. It is the third step in the universal histidine degradation pathway. The sequence is that of Imidazolonepropionase from Streptococcus pyogenes serotype M2 (strain MGAS10270).